The following is a 1093-amino-acid chain: Semaphorin 5c (1093 aa).

The first 34 residues, 1–34 (MNMLILKLPKMFSQLWLLLILSLLTLEGPQPSTG), serve as a signal peptide directing secretion. The N-linked (GlcNAc...) asparagine glycan is linked to N48. Residues 50 to 495 (SRYISYQDLM…TDLALTRIPA (446 aa)) enclose the Sema domain. 2 disulfide bridges follow: C118/C128 and C146/C155. N-linked (GlcNAc...) asparagine glycosylation is found at N162, N182, N285, and N295. 2 disulfide bridges follow: C271/C376 and C296/C338. N-linked (GlcNAc...) asparagine glycosylation occurs at N341. The 50-residue stretch at 497 to 546 (HCSRHVSQSSCLNSMDPYCGWNELVERCMPQPQDSSVLQHWHQAPQITCP) folds into the PSI domain. TSP type-1 domains lie at 553–605 (DGGW…TNCT), 607–663 (HGGW…PPCP), and 671–726 (DGGW…QSCQ). An N-linked (GlcNAc...) asparagine glycan is attached at N603. Intrachain disulfides connect C619–C656, C623–C662, C634–C646, C683–C720, C687–C725, and C698–C710. N-linked (GlcNAc...) asparagine glycosylation occurs at N745. 3 TSP type-1 domains span residues 794 to 834 (DSAD…HACP), 850 to 901 (HGEW…VPCE), and 904 to 953 (LGWS…NECE). 3 cysteine pairs are disulfide-bonded: C862-C895, C866-C900, and C877-C885. A helical transmembrane segment spans residues 960 to 980 (TATLPIVIFVGLLFTVACCLA). 2 N-linked (GlcNAc...) asparagine glycosylation sites follow: N998 and N1046. The interval 1018-1056 (PTKDYYDQRPKRQSSFRMPAKTSNLGNGNGTLNRNNMHQ) is disordered. Residues 1041–1053 (NLGNGNGTLNRNN) are compositionally biased toward low complexity.

Belongs to the semaphorin family. As to expression, in egg chambers, high levels of expression in the follicle cells, with little to no expression in the germ cells (at protein level). In stage 3 to 7 egg chambers, planar polarized at the basal epithelial surface (at protein level).

Its subcellular location is the apical cell membrane. The protein localises to the lateral cell membrane. The protein resides in the endosome. Its function is as follows. Regulates the motility of migrating epithelial cells by providing guidance cues within the migratory environment and may also play a role in development of the olfactory system. May act as a positive axonal guidance cue. Function in neurons is essential for adult survival and is important for climbing behavior. Promotes collective migration of follicular epithelial cells in egg chambers, likely by acting at the leading edge of the basal epithelium cells to provide guidance cues across the cell boundary to the trailing edge of the cell ahead. The transmembrane receptor PlexA on the trailing edge of the cell ahead, appears to transduce this signal to suppress the formation of protrusions. Involved in olfactory avoidance behavior. This Drosophila melanogaster (Fruit fly) protein is Semaphorin 5c.